Reading from the N-terminus, the 640-residue chain is 2-hydroxyacyl-CoA lyase 2 (640 aa).

A helical transmembrane segment spans residues 2–22 (VLFLIIAAIIIGLLLWKWLDV). E102 contributes to the thiamine diphosphate binding site. The thiamine pyrophosphate binding stretch occupies residues 477-557 (DFVGSAAYIV…VIGIVGNDAC (81 aa)). Positions 528 and 554 each coordinate Mg(2+).

The protein belongs to the TPP enzyme family. It depends on Mg(2+) as a cofactor. The cofactor is thiamine diphosphate.

The protein localises to the endoplasmic reticulum membrane. It catalyses the reaction 2-hydroxyoctadecanoyl-CoA = heptadecanal + formyl-CoA. The catalysed reaction is (2R)-hydroxyhexadecanoyl-CoA = pentadecanal + formyl-CoA. Functionally, endoplasmic reticulum 2-OH acyl-CoA lyase involved in the cleavage (C1 removal) reaction in the fatty acid alpha-oxydation in a thiamine pyrophosphate (TPP)-dependent manner. This Caenorhabditis elegans protein is 2-hydroxyacyl-CoA lyase 2.